A 348-amino-acid chain; its full sequence is Phospho-2-dehydro-3-deoxyheptonate aldolase, Trp-sensitive (348 aa).

It belongs to the class-I DAHP synthase family.

The enzyme catalyses D-erythrose 4-phosphate + phosphoenolpyruvate + H2O = 7-phospho-2-dehydro-3-deoxy-D-arabino-heptonate + phosphate. It functions in the pathway metabolic intermediate biosynthesis; chorismate biosynthesis; chorismate from D-erythrose 4-phosphate and phosphoenolpyruvate: step 1/7. Functionally, stereospecific condensation of phosphoenolpyruvate (PEP) and D-erythrose-4-phosphate (E4P) giving rise to 3-deoxy-D-arabino-heptulosonate-7-phosphate (DAHP). This Enterobacter agglomerans (Erwinia herbicola) protein is Phospho-2-dehydro-3-deoxyheptonate aldolase, Trp-sensitive (aroH).